The following is a 171-amino-acid chain: Group 1 truncated hemoglobin LI410 (171 aa).

Residues Met-1–Ala-23 constitute a chloroplast transit peptide. Residues Tyr-63 and His-111 each coordinate heme.

It belongs to the truncated hemoglobin family. Group I subfamily. It depends on heme as a cofactor.

It localises to the plastid. It is found in the chloroplast. The sequence is that of Group 1 truncated hemoglobin LI410 (LI410) from Chlamydomonas moewusii (Chlamydomonas eugametos).